We begin with the raw amino-acid sequence, 452 residues long: MRETKDLREKARQFLTILIPILITQAGLSLITVLDTVMSGKVSAADLAGVAIGSSLWTPVYTGLAGILTAVTPMVAQLMGAKRQKDVPYTVIQSIYVAGIISLAVIVSGYFLIDPVLENLDLERKVAVIAKQYLICIGLGILPLFVYNVMRCFIDSLGKTRVTMLITLCSLPINFVLNYLFIFGNFGFPKLGGAGAGLASAITYWCICLISLYIVHKKTPFHQFRIFGTFYSFSFAESMKLLKIGIPIGFAIFFETSIFAAVTLLMSHFDTVTIASHQAAMNFASLLYMLPLSVSMTLTIVVGFEAGAKRFKDSRAYSYLGISIAVGFSLFTALIILLFREQIAGLYAADRDVLLLTKDFLLYALFFQLSDAIAAPIQGALRGYKDVNYTLVTALVSYWIIGLPVGFVIGTYTSFGAFGYWIGLITGLAAGAVGLFFRLKRIQNRYIHTQSM.

12 helical membrane-spanning segments follow: residues 12–34 (RQFL…ITVL), 49–71 (GVAI…LTAV), 91–113 (VIQS…YFLI), 128–150 (VIAK…YNVM), 162–184 (VTML…FIFG), 194–216 (AGAG…YIVH), 245–267 (GIPI…LLMS), 282–304 (NFAS…VVGF), 317–339 (YSYL…ILLF), 359–381 (DFLL…QGAL), 388–410 (NYTL…FVIG), and 415–437 (FGAF…GLFF).

The protein belongs to the multi antimicrobial extrusion (MATE) (TC 2.A.66.1) family.

The protein resides in the cell membrane. Its function is as follows. Multidrug efflux pump. This Bacillus licheniformis (strain ATCC 14580 / DSM 13 / JCM 2505 / CCUG 7422 / NBRC 12200 / NCIMB 9375 / NCTC 10341 / NRRL NRS-1264 / Gibson 46) protein is Probable multidrug resistance protein NorM (norM).